The primary structure comprises 247 residues: Carbonic anhydrase (247 aa).

The first 34 residues, 1–34 (MMFNKQIFTILILSLSLALAGSGCISEGAEDNVA), serve as a signal peptide directing secretion. Position 93–95 (93–95 (RSD)) interacts with substrate. The active-site Proton donor/acceptor is the Glu96. A substrate-binding site is contributed by 109–110 (QD). Residue His115 coordinates Zn(2+). Glu118 is a catalytic residue. Positions 151 and 156 each coordinate Zn(2+). Position 236 (Asn236) interacts with substrate.

The protein belongs to the gamma-class carbonic anhydrase family. Homotrimer. The cofactor is Zn(2+).

It is found in the secreted. The enzyme catalyses hydrogencarbonate + H(+) = CO2 + H2O. In terms of biological role, reversible hydration of carbon dioxide. Important for growth on acetate. As a probably extracellular enzyme, it may support a H(+)/CH(3)COO(-) symport mechanism and/or conversion of CO(2) to HCO(3)(-), removing excess CO(2) produced by growth on acetate. This is Carbonic anhydrase from Methanosarcina thermophila (strain ATCC 43570 / DSM 1825 / OCM 12 / VKM B-1830 / TM-1).